Here is a 309-residue protein sequence, read N- to C-terminus: MKNRTMFGEFILLGLTNQPELQVMIFIFLFLTYMLSILGNLTIITLTLLDPHLQTPMYFFLRNFSFLEISFTSIFIPRFLTSMTTGNKVISFAGCLTQYFFAIFLGATEFYLLASMSYDRYVAICKPLHYLTIMSSRVCIQLVFCSWLGGFLAILPPIILMTQVDFCVSNILNHYYCDYGPLVELACSDTSLLELMVILLAVVTLMVTLVLVTLSYTYIIRTILRIPSAQQRTKAFSTCSSHMIVISLSYGSCMFMYINPSAKEGGAFNKGIAVLITSVTPLLNPFIYTLRNQQVKQAFKDSVKKIVKL.

The Extracellular portion of the chain corresponds to M1 to V23. N3 carries an N-linked (GlcNAc...) asparagine glycan. The helical transmembrane segment at M24 to I44 threads the bilayer. At T45–H52 the chain is on the cytoplasmic side. The helical transmembrane segment at L53–S73 threads the bilayer. The Extracellular segment spans residues I74–T97. An intrachain disulfide couples C95 to C187. Residues Q98 to Y118 traverse the membrane as a helical segment. Over D119–R137 the chain is Cytoplasmic. A helical membrane pass occupies residues V138–I158. The Extracellular segment spans residues I159 to L195. The chain crosses the membrane as a helical span at residues M196–S215. At Y216–A235 the chain is on the cytoplasmic side. Residues F236 to M256 form a helical membrane-spanning segment. Over Y257–N269 the chain is Extracellular. Residues K270–L290 form a helical membrane-spanning segment. Residues R291–L309 lie on the Cytoplasmic side of the membrane.

Belongs to the G-protein coupled receptor 1 family.

Its subcellular location is the cell membrane. Odorant receptor. The protein is Olfactory receptor 6C4 (OR6C4) of Homo sapiens (Human).